Here is a 180-residue protein sequence, read N- to C-terminus: Large ribosomal subunit protein uL6 (180 aa).

The protein belongs to the universal ribosomal protein uL6 family. As to quaternary structure, part of the 50S ribosomal subunit.

In terms of biological role, this protein binds to the 23S rRNA, and is important in its secondary structure. It is located near the subunit interface in the base of the L7/L12 stalk, and near the tRNA binding site of the peptidyltransferase center. The sequence is that of Large ribosomal subunit protein uL6 from Borrelia hermsii (strain HS1 / DAH).